Consider the following 498-residue polypeptide: 3-octaprenyl-4-hydroxybenzoate carboxy-lyase (498 aa).

Asn-175 contributes to the Mn(2+) binding site. Residues 178-180 (IYR), 192-194 (RWL), and 197-198 (RG) each bind prenylated FMN. Residue Glu-241 coordinates Mn(2+). Asp-290 acts as the Proton donor in catalysis.

The protein belongs to the UbiD family. In terms of assembly, homohexamer. Requires prenylated FMN as cofactor. Mn(2+) is required as a cofactor.

The protein localises to the cell membrane. It catalyses the reaction a 4-hydroxy-3-(all-trans-polyprenyl)benzoate + H(+) = a 2-(all-trans-polyprenyl)phenol + CO2. Its pathway is cofactor biosynthesis; ubiquinone biosynthesis. Functionally, catalyzes the decarboxylation of 3-octaprenyl-4-hydroxy benzoate to 2-octaprenylphenol, an intermediate step in ubiquinone biosynthesis. This Yersinia pestis bv. Antiqua (strain Antiqua) protein is 3-octaprenyl-4-hydroxybenzoate carboxy-lyase.